The primary structure comprises 293 residues: Ethanolamine ammonia-lyase small subunit (293 aa).

Val207 and Glu228 together coordinate adenosylcob(III)alamin.

This sequence belongs to the EutC family. In terms of assembly, the basic unit is a heterodimer which dimerizes to form tetramers. The heterotetramers trimerize; 6 large subunits form a core ring with 6 small subunits projecting outwards. It depends on adenosylcob(III)alamin as a cofactor.

The protein localises to the bacterial microcompartment. The enzyme catalyses ethanolamine = acetaldehyde + NH4(+). The protein operates within amine and polyamine degradation; ethanolamine degradation. Its function is as follows. Catalyzes the deamination of various vicinal amino-alcohols to oxo compounds. Allows this organism to utilize ethanolamine as the sole source of nitrogen and carbon in the presence of external vitamin B12. The sequence is that of Ethanolamine ammonia-lyase small subunit from Listeria monocytogenes serotype 4a (strain HCC23).